We begin with the raw amino-acid sequence, 80 residues long: MVKLRLKRCGKKQRAVYRIVAIDVRSRREGRDLRKVGFYDPIKNQTYLNIPVILNFLEQGAQPTGTVQDISKKAGFFMDL.

Belongs to the bacterial ribosomal protein bS16 family.

It localises to the plastid. Its subcellular location is the chloroplast. The sequence is that of Small ribosomal subunit protein bS16c from Lotus japonicus (Lotus corniculatus var. japonicus).